Consider the following 115-residue polypeptide: Transcriptional regulator protein FixT (115 aa).

Interacts directly with FixL.

Functionally, prevents transcription of the intermediate key regulatory genes nifA and fixK by counteracting the activity of the FixLJ two-component system. Acts as an inhibitor of the sensor hemoprotein kinase fixL, preventing the production or the accumulation of its phosphorylated form. In Rhizobium meliloti (strain 1021) (Ensifer meliloti), this protein is Transcriptional regulator protein FixT (fixT).